We begin with the raw amino-acid sequence, 377 residues long: tRNA N6-adenosine threonylcarbamoyltransferase (377 aa).

Residues histidine 129 and histidine 133 each coordinate Fe cation. Substrate is bound by residues 151 to 155, aspartate 184, glycine 197, and asparagine 298; that span reads LVSGG. Aspartate 326 contributes to the Fe cation binding site. The tract at residues 358–377 is disordered; the sequence is DGAAAKSDPAIGSGRKGPKA.

Belongs to the KAE1 / TsaD family. The cofactor is Fe(2+).

Its subcellular location is the cytoplasm. It carries out the reaction L-threonylcarbamoyladenylate + adenosine(37) in tRNA = N(6)-L-threonylcarbamoyladenosine(37) in tRNA + AMP + H(+). Required for the formation of a threonylcarbamoyl group on adenosine at position 37 (t(6)A37) in tRNAs that read codons beginning with adenine. Is involved in the transfer of the threonylcarbamoyl moiety of threonylcarbamoyl-AMP (TC-AMP) to the N6 group of A37, together with TsaE and TsaB. TsaD likely plays a direct catalytic role in this reaction. This Maricaulis maris (strain MCS10) (Caulobacter maris) protein is tRNA N6-adenosine threonylcarbamoyltransferase.